Here is a 263-residue protein sequence, read N- to C-terminus: Hydroxyacylglutathione hydrolase (263 aa).

7 residues coordinate Zn(2+): His-60, His-62, Asp-64, His-65, His-120, Asp-137, and His-175.

This sequence belongs to the metallo-beta-lactamase superfamily. Glyoxalase II family. Monomer. Zn(2+) is required as a cofactor.

The catalysed reaction is an S-(2-hydroxyacyl)glutathione + H2O = a 2-hydroxy carboxylate + glutathione + H(+). Its pathway is secondary metabolite metabolism; methylglyoxal degradation; (R)-lactate from methylglyoxal: step 2/2. Functionally, thiolesterase that catalyzes the hydrolysis of S-D-lactoyl-glutathione to form glutathione and D-lactic acid. This chain is Hydroxyacylglutathione hydrolase, found in Shewanella pealeana (strain ATCC 700345 / ANG-SQ1).